The chain runs to 292 residues: MQTVQKHDHLFLDISQHAMRLDLLARTALYEEVSLAHKPGLVCPTTQGSHQDMDFALFERSIQSLTYYFQEQCLNGYHEVSFDSIRQCGIQAEQDMMAATKQINTHKGAIFNLGFASAAVGKCFAQDILLNAISISRMIQQTWQEELLHHLERNPNSHGQRMRSQYGITGAIEEVASGFKTVLDVAVPHYLEIYAKTGDKKRASLQALFALMSHLQDTNIVWRGGLSALYIVQDMAKQFLARGGVLQHNWMQDVSKVEDYFVRHHLSPGGSADLLGVTLFMLKVEHEFRNII.

It belongs to the CitG/MdcB family.

It carries out the reaction 3'-dephospho-CoA + ATP = 2'-(5''-triphospho-alpha-D-ribosyl)-3'-dephospho-CoA + adenine. Its function is as follows. Involved in the formation of 2-(5''-phosphoribosyl)-3'-dephosphocoenzyme-A, the prosthetic group of the acyl-carrier protein of the malonate decarboxylase. This Acinetobacter calcoaceticus protein is Probable 2-(5''-triphosphoribosyl)-3'-dephosphocoenzyme-A synthase (mdcB).